The sequence spans 186 residues: ATP synthase subunit delta (186 aa).

It belongs to the ATPase delta chain family. F-type ATPases have 2 components, F(1) - the catalytic core - and F(0) - the membrane proton channel. F(1) has five subunits: alpha(3), beta(3), gamma(1), delta(1), epsilon(1). F(0) has three main subunits: a(1), b(2) and c(10-14). The alpha and beta chains form an alternating ring which encloses part of the gamma chain. F(1) is attached to F(0) by a central stalk formed by the gamma and epsilon chains, while a peripheral stalk is formed by the delta and b chains.

The protein localises to the cell inner membrane. F(1)F(0) ATP synthase produces ATP from ADP in the presence of a proton or sodium gradient. F-type ATPases consist of two structural domains, F(1) containing the extramembraneous catalytic core and F(0) containing the membrane proton channel, linked together by a central stalk and a peripheral stalk. During catalysis, ATP synthesis in the catalytic domain of F(1) is coupled via a rotary mechanism of the central stalk subunits to proton translocation. Its function is as follows. This protein is part of the stalk that links CF(0) to CF(1). It either transmits conformational changes from CF(0) to CF(1) or is implicated in proton conduction. This Brucella canis (strain ATCC 23365 / NCTC 10854 / RM-666) protein is ATP synthase subunit delta.